The primary structure comprises 101 residues: Urease subunit beta (101 aa).

It belongs to the urease beta subunit family. In terms of assembly, heterotrimer of UreA (gamma), UreB (beta) and UreC (alpha) subunits. Three heterotrimers associate to form the active enzyme.

The protein localises to the cytoplasm. It carries out the reaction urea + 2 H2O + H(+) = hydrogencarbonate + 2 NH4(+). It functions in the pathway nitrogen metabolism; urea degradation; CO(2) and NH(3) from urea (urease route): step 1/1. The sequence is that of Urease subunit beta from Bradyrhizobium diazoefficiens (strain JCM 10833 / BCRC 13528 / IAM 13628 / NBRC 14792 / USDA 110).